Consider the following 344-residue polypeptide: Adenosine kinase 1 (344 aa).

The active site involves Asp-299.

Belongs to the carbohydrate kinase PfkB family. Interacts with the begomovirus AL2 protein and the curtovirus L2 protein. Mg(2+) serves as cofactor. In terms of tissue distribution, widely expressed.

The catalysed reaction is adenosine + ATP = AMP + ADP + H(+). The protein operates within purine metabolism; AMP biosynthesis via salvage pathway; AMP from adenosine: step 1/1. Its activity is regulated as follows. Inactivated by the begomovirus AL2 protein or the curtovirus L2 protein. Its function is as follows. ATP dependent phosphorylation of adenosine and other related nucleoside analogs to monophosphate derivatives. Essential to sustain methyl recycling. The chain is Adenosine kinase 1 from Arabidopsis thaliana (Mouse-ear cress).